Consider the following 149-residue polypeptide: Transcriptional regulator MraZ (149 aa).

2 consecutive SpoVT-AbrB domains span residues K7–H54 and A83–N126.

This sequence belongs to the MraZ family. As to quaternary structure, forms oligomers.

The protein resides in the cytoplasm. It localises to the nucleoid. The polypeptide is Transcriptional regulator MraZ (Rickettsia typhi (strain ATCC VR-144 / Wilmington)).